The chain runs to 441 residues: Chromatin structure-remodeling complex subunit SFH1 (441 aa).

A compositionally biased stretch (acidic residues) spans 124 to 137; the sequence is DFDANDFEDDDDDD. 2 disordered regions span residues 124–183 and 383–407; these read DFDA…AAPP and EMTP…KRES. 2 stretches are compositionally biased toward basic and acidic residues: residues 138-147 and 155-166; these read QSQRESRDGS and DGTKKEEQDKFA.

The protein belongs to the SNF5 family.

It localises to the nucleus. Its function is as follows. Part of the chromatin structure-remodeling complex (RSC) which is involved in transcription regulation and nucleosome positioning. RSC is responsible for the transfer of a histone octamer from a nucleosome core particle to naked DNA. The reaction requires ATP and involves an activated RSC-nucleosome intermediate. Remodeling reaction also involves DNA translocation, DNA twist and conformational change. As a reconfigurer of centromeric and flanking nucleosomes, RSC complex is required both for proper kinetochore function in chromosome segregation and, via a PKC1-dependent signaling pathway, for organization of the cellular cytoskeleton. This subunit is essential for mitotic growth and required for cell cycle progression. The polypeptide is Chromatin structure-remodeling complex subunit SFH1 (SFH1) (Yarrowia lipolytica (strain CLIB 122 / E 150) (Yeast)).